A 402-amino-acid chain; its full sequence is Methylthioribose-1-phosphate isomerase (402 aa).

Aspartate 275 functions as the Proton donor in the catalytic mechanism.

Belongs to the eIF-2B alpha/beta/delta subunits family. MtnA subfamily.

It is found in the cytoplasm. Its subcellular location is the nucleus. It carries out the reaction 5-(methylsulfanyl)-alpha-D-ribose 1-phosphate = 5-(methylsulfanyl)-D-ribulose 1-phosphate. It functions in the pathway amino-acid biosynthesis; L-methionine biosynthesis via salvage pathway; L-methionine from S-methyl-5-thio-alpha-D-ribose 1-phosphate: step 1/6. In terms of biological role, catalyzes the interconversion of methylthioribose-1-phosphate (MTR-1-P) into methylthioribulose-1-phosphate (MTRu-1-P). The sequence is that of Methylthioribose-1-phosphate isomerase from Clavispora lusitaniae (strain ATCC 42720) (Yeast).